The sequence spans 363 residues: UDP-3-O-acylglucosamine N-acyltransferase (363 aa).

His-252 (proton acceptor) is an active-site residue.

This sequence belongs to the transferase hexapeptide repeat family. LpxD subfamily. As to quaternary structure, homotrimer.

It catalyses the reaction a UDP-3-O-[(3R)-3-hydroxyacyl]-alpha-D-glucosamine + a (3R)-hydroxyacyl-[ACP] = a UDP-2-N,3-O-bis[(3R)-3-hydroxyacyl]-alpha-D-glucosamine + holo-[ACP] + H(+). It functions in the pathway bacterial outer membrane biogenesis; LPS lipid A biosynthesis. Catalyzes the N-acylation of UDP-3-O-acylglucosamine using 3-hydroxyacyl-ACP as the acyl donor. Is involved in the biosynthesis of lipid A, a phosphorylated glycolipid that anchors the lipopolysaccharide to the outer membrane of the cell. This Cupriavidus necator (strain ATCC 17699 / DSM 428 / KCTC 22496 / NCIMB 10442 / H16 / Stanier 337) (Ralstonia eutropha) protein is UDP-3-O-acylglucosamine N-acyltransferase.